The primary structure comprises 196 residues: Late protein I196L (196 aa).

A run of 2 repeats spans residues 28 to 48 and 49 to 70. Residues 71–92 form a 3; approximate repeat; it reads SNYLTSAISTNISDKEEDTPFS.

Belongs to the asfivirus I196L family.

The chain is Late protein I196L from African swine fever virus (isolate Warthog/Namibia/Wart80/1980) (ASFV).